Reading from the N-terminus, the 514-residue chain is 2-isopropylmalate synthase (514 aa).

Residues 5–268 form the Pyruvate carboxyltransferase domain; that stretch reads LIIFDTTLRD…DVGIDTSQIV (264 aa). Positions 14, 202, 204, and 239 each coordinate Mn(2+). Residues 395-514 are regulatory domain; sequence KFVSLSQRSE…KDDKVNPQRS (120 aa).

It belongs to the alpha-IPM synthase/homocitrate synthase family. LeuA type 1 subfamily. As to quaternary structure, homodimer. Mn(2+) is required as a cofactor.

It is found in the cytoplasm. The enzyme catalyses 3-methyl-2-oxobutanoate + acetyl-CoA + H2O = (2S)-2-isopropylmalate + CoA + H(+). It participates in amino-acid biosynthesis; L-leucine biosynthesis; L-leucine from 3-methyl-2-oxobutanoate: step 1/4. Catalyzes the condensation of the acetyl group of acetyl-CoA with 3-methyl-2-oxobutanoate (2-ketoisovalerate) to form 3-carboxy-3-hydroxy-4-methylpentanoate (2-isopropylmalate). The polypeptide is 2-isopropylmalate synthase (Burkholderia cenocepacia (strain ATCC BAA-245 / DSM 16553 / LMG 16656 / NCTC 13227 / J2315 / CF5610) (Burkholderia cepacia (strain J2315))).